The sequence spans 122 residues: Neuropeptide B (122 aa).

The signal sequence occupies residues M1–A24. The residue at position 25 (W25) is a 6'-bromotryptophan. Positions S56–K122 are excised as a propeptide.

It belongs to the neuropeptide B/W family.

Its subcellular location is the secreted. May be involved in the regulation of feeding, neuroendocrine system, memory, learning and in the afferent pain pathway. This is Neuropeptide B (NPB) from Bos taurus (Bovine).